The chain runs to 144 residues: MNFKYIIAVSFFIASAYARTEEKDVQSLSQRDVLEEESLREIRGIGGVLLSAGKAALKGLAKVLAEKYANGKRTAEDHEVMKRLEAVMRDLDSLDHPEEASERQTRGFNQEEIANLFTKKEKRILGPVLGLVGNALGGLIKKIG.

The signal sequence occupies residues M1–A18. The propeptide occupies R19–R43. N70 carries the post-translational modification Asparagine amide. Positions T74–R123 are excised as a propeptide. I143 carries the isoleucine amide modification.

The protein belongs to the bombinin family. As to expression, expressed by the skin glands.

The protein localises to the secreted. Its function is as follows. Maximin-4 shows antibacterial activity against both Gram-positive and Gram-negative bacteria. It also shows antimicrobial activity against the fungus C.albicans, but not against A.flavus nor P.uticale. It has little hemolytic activity. It does not possess a significant cytotoxicity against tumor cell lines. It does not possess a significant anti-HIV activity. In terms of biological role, maximin-H3 shows antibacterial activity against both Gram-positive and Gram-negative bacteria. It also shows antimicrobial activity against the fungus C.albicans. Shows strong hemolytic activity. In Bombina maxima (Giant fire-bellied toad), this protein is Maximins 4/H3 type 3.